Reading from the N-terminus, the 493-residue chain is 3-octaprenyl-4-hydroxybenzoate carboxy-lyase (493 aa).

Asn172 lines the Mn(2+) pocket. Residues 175 to 177, 189 to 191, and 194 to 195 contribute to the prenylated FMN site; these read IYR, RWL, and RG. Glu238 is a binding site for Mn(2+). Catalysis depends on Asp287, which acts as the Proton donor.

The protein belongs to the UbiD family. In terms of assembly, homohexamer. Requires prenylated FMN as cofactor. Mn(2+) is required as a cofactor.

It is found in the cell membrane. The enzyme catalyses a 4-hydroxy-3-(all-trans-polyprenyl)benzoate + H(+) = a 2-(all-trans-polyprenyl)phenol + CO2. Its pathway is cofactor biosynthesis; ubiquinone biosynthesis. Catalyzes the decarboxylation of 3-octaprenyl-4-hydroxy benzoate to 2-octaprenylphenol, an intermediate step in ubiquinone biosynthesis. In Shewanella amazonensis (strain ATCC BAA-1098 / SB2B), this protein is 3-octaprenyl-4-hydroxybenzoate carboxy-lyase.